We begin with the raw amino-acid sequence, 349 residues long: Draxin (349 aa).

The signal sequence occupies residues 1–25 (MAASSTFFSPSLFLCVLVLIDITLA). A compositionally biased stretch (polar residues) spans 40 to 53 (NHLQNQETWPQQPR). Disordered stretches follow at residues 40–63 (NHLQ…HGLA), 119–166 (PHAE…LYKK), and 246–273 (WPSA…EGEP). The segment covering 54–63 (SGHHHKHGLA) has biased composition (basic residues). Over residues 119-139 (PHAERENQSPGSERGKKQNRE) the composition is skewed to basic and acidic residues. 2 stretches are compositionally biased toward basic residues: residues 140–155 (QRRH…HRGK) and 249–258 (AKKKEKRRSK). Asn264 is a glycosylation site (N-linked (GlcNAc...) asparagine).

It belongs to the draxin family.

The protein localises to the secreted. Its function is as follows. Chemorepulsive axon guidance protein required for the development of spinal cord and forebrain commissures. Acts as a chemorepulsive guidance protein for commissural axons during development. Able to inhibit or repel neurite outgrowth from dorsal spinal cord and cortical explants in vitro. Binds directly to the neurites and growth cones. This chain is Draxin, found in Gallus gallus (Chicken).